We begin with the raw amino-acid sequence, 323 residues long: Ethanolamine-phosphate cytidylyltransferase (323 aa).

The protein belongs to the cytidylyltransferase family.

The protein localises to the cytoplasm. It localises to the nucleus. The catalysed reaction is phosphoethanolamine + CTP + H(+) = CDP-ethanolamine + diphosphate. The protein operates within phospholipid metabolism; phosphatidylethanolamine biosynthesis; phosphatidylethanolamine from ethanolamine: step 2/3. Its function is as follows. Ethanolamine-phosphate cytidylyltransferase which catalyzes the second step of phosphatidylethanolamine biosynthesis. Involved in the maintenance of plasma membrane and required for proper sporulation. This is Ethanolamine-phosphate cytidylyltransferase from Saccharomyces cerevisiae (strain ATCC 204508 / S288c) (Baker's yeast).